We begin with the raw amino-acid sequence, 512 residues long: Glycerol kinase (512 aa).

Residue threonine 13 coordinates ADP. ATP is bound by residues threonine 13, threonine 14, and serine 15. Threonine 13 contributes to the sn-glycerol 3-phosphate binding site. Arginine 17 is an ADP binding site. Sn-glycerol 3-phosphate is bound by residues arginine 83, glutamate 84, tyrosine 135, and aspartate 252. Glycerol contacts are provided by arginine 83, glutamate 84, tyrosine 135, aspartate 252, and glutamine 253. The ADP site is built by threonine 274 and glycine 318. Threonine 274, glycine 318, glutamine 322, and glycine 419 together coordinate ATP. ADP contacts are provided by glycine 419 and asparagine 423.

The protein belongs to the FGGY kinase family.

The enzyme catalyses glycerol + ATP = sn-glycerol 3-phosphate + ADP + H(+). The protein operates within polyol metabolism; glycerol degradation via glycerol kinase pathway; sn-glycerol 3-phosphate from glycerol: step 1/1. Its activity is regulated as follows. Inhibited by fructose 1,6-bisphosphate (FBP). Key enzyme in the regulation of glycerol uptake and metabolism. Catalyzes the phosphorylation of glycerol to yield sn-glycerol 3-phosphate. The chain is Glycerol kinase from Corynebacterium kroppenstedtii (strain DSM 44385 / JCM 11950 / CIP 105744 / CCUG 35717).